The chain runs to 155 residues: MIDLIARKRPPAGLRPALRASLSAAMQHFGGEEREVTVVLVGDPEIRALKLEHWGEDAATDVLSFPTWEPGDPFMPPHLGDIIISLDTAQRQAESRGHSLTREVALLASHGLTHLVGHDHPHAEGLGFEEGATGEDWQVFHDAWAAAQTGLPAGA.

Zn(2+)-binding residues include H110, H114, and H120.

It belongs to the endoribonuclease YbeY family. The cofactor is Zn(2+).

The protein localises to the cytoplasm. In terms of biological role, single strand-specific metallo-endoribonuclease involved in late-stage 70S ribosome quality control and in maturation of the 3' terminus of the 16S rRNA. The polypeptide is Endoribonuclease YbeY (Deinococcus radiodurans (strain ATCC 13939 / DSM 20539 / JCM 16871 / CCUG 27074 / LMG 4051 / NBRC 15346 / NCIMB 9279 / VKM B-1422 / R1)).